The primary structure comprises 330 residues: Putative heme-binding peroxidase (330 aa).

The active-site Proton acceptor is the His38. His162 contributes to the heme b binding site. Trp178 functions as the Tryptophan radical intermediate in the catalytic mechanism. Positions Gly286–Leu330 are disordered.

This sequence belongs to the peroxidase family. Cytochrome c peroxidase subfamily. It depends on heme b as a cofactor.

Functionally, destroys radicals which are normally produced within the cells and which are toxic to biological systems. This is Putative heme-binding peroxidase (CCP2) from Mycosarcoma maydis (Corn smut fungus).